The following is a 254-amino-acid chain: DNA repair protein RecO (254 aa).

It belongs to the RecO family.

In terms of biological role, involved in DNA repair and RecF pathway recombination. In Anaeromyxobacter dehalogenans (strain 2CP-C), this protein is DNA repair protein RecO.